The primary structure comprises 633 residues: Peptidoglycan D,D-transpeptidase MrdA (633 aa).

The chain crosses the membrane as a helical span at residues Leu-22–Leu-42. Ser-330 acts as the Acyl-ester intermediate in catalysis.

It belongs to the transpeptidase family. MrdA subfamily.

The protein localises to the cell inner membrane. The enzyme catalyses Preferential cleavage: (Ac)2-L-Lys-D-Ala-|-D-Ala. Also transpeptidation of peptidyl-alanyl moieties that are N-acyl substituents of D-alanine.. The protein operates within cell wall biogenesis; peptidoglycan biosynthesis. Its function is as follows. Catalyzes cross-linking of the peptidoglycan cell wall. The sequence is that of Peptidoglycan D,D-transpeptidase MrdA from Escherichia coli O157:H7.